The primary structure comprises 771 residues: Endoplasmin homolog (771 aa).

Residues 1–24 (MANSSLLRVVLVALLLLGSVTVSA) form the signal peptide. ATP-binding residues include N63, D109, and F160. An N-linked (GlcNAc...) asparagine glycan is attached at N63. Residues 254 to 282 (AATPESAAEERSLDEGAVEEDPDKEGDTQ) form a disordered region. 2 N-linked (GlcNAc...) asparagine glycosylation sites follow: N306 and N402. The interval 727-771 (ADDSLLPPDDAEYTVSDTETEEEEEQPKVDTNAHEEAETDGEGDL) is disordered. Positions 752–762 (QPKVDTNAHEE) are enriched in basic and acidic residues. The short motif at 768 to 771 (EGDL) is the Prevents secretion from ER element.

This sequence belongs to the heat shock protein 90 family. Homotetramer.

Its subcellular location is the endoplasmic reticulum. Its function is as follows. Molecular chaperone that functions in the processing and transport of secreted proteins. Required for the synthesis of lipophosphoglycan (LPG), a cell surface glycoconjugate. Necessary for the attachment of the galactosyl residue to the mannose within the phosphoglycan repeats of the nascent LPG chain. Also required for addition of phosphoglycan to acid phosphatase. Not required for normal growth. Has ATPase activity. Binds heparin with micromolar affinity which may facilitate infection of host cells. The polypeptide is Endoplasmin homolog (Leishmania donovani).